We begin with the raw amino-acid sequence, 979 residues long: Oncostatin-M-specific receptor subunit beta (979 aa).

A signal peptide spans 1–27 (MALFAVFQTTFFLTLLSLRTYQSEVLA). The Extracellular portion of the chain corresponds to 28–740 (ERLPLTPVSL…VTTPDEHSSM (713 aa)). A glycan (N-linked (GlcNAc...) asparagine) is linked at N163. A disulfide bridge connects residues C245 and C255. Residues N326 and N380 are each glycosylated (N-linked (GlcNAc...) asparagine). 4 Fibronectin type-III domains span residues 335–428 (NPFS…TLEA), 433–528 (APDV…DPEN), 529–623 (KEVE…SQEL), and 625–736 (PSDN…TPDE). Residues 415–419 (WSEWS) carry the WSXWS motif motif. N-linked (GlcNAc...) asparagine glycans are attached at residues N446 and N580. A helical transmembrane segment spans residues 741-761 (LIHILLPMVFCVLLIMVMCYL). Over 762–979 (KSQWIKETCY…TLLDPGEHYC (218 aa)) the chain is Cytoplasmic. The Box 1 motif signature appears at 770–778 (CYPDIPDPY). Phosphoserine occurs at positions 826 and 889.

Belongs to the type I cytokine receptor family. Type 2 subfamily. In terms of assembly, heterodimer composed of OSMR and IL6ST (type II OSM receptor). Heterodimer with IL31RA to form the IL31 receptor. Expressed in keratinocytes (at protein level). Expressed at relatively high levels in all neural cells as well as fibroblast and epithelial cells.

Its subcellular location is the membrane. Functionally, associates with IL31RA to form the IL31 receptor. Binds IL31 to activate STAT3 and possibly STAT1 and STAT5. Capable of transducing OSM-specific signaling events. The sequence is that of Oncostatin-M-specific receptor subunit beta (OSMR) from Homo sapiens (Human).